A 113-amino-acid chain; its full sequence is U11-theraphotoxin-Hhn1a (113 aa).

The first 21 residues, 1–21 (MNTVRVTFLLVFVLAVSLGQA), serve as a signal peptide directing secretion. Positions 22–74 (DKDENRMEMQKKTEQGKSYLDFAENLLLQKLEELEAKLLEEDSEESRNSRQKR) are excised as a propeptide. Cystine bridges form between Cys75–Cys90, Cys82–Cys95, and Cys89–Cys110.

This sequence belongs to the neurotoxin 14 (magi-1) family. 01 (HNTX-16) subfamily. In terms of tissue distribution, expressed by the venom gland.

Its subcellular location is the secreted. Its function is as follows. Probable ion channel inhibitor. This is U11-theraphotoxin-Hhn1a from Cyriopagopus hainanus (Chinese bird spider).